The following is a 302-amino-acid chain: Arginase (302 aa).

Mn(2+) contacts are provided by histidine 103, aspartate 126, histidine 128, and aspartate 130. Substrate-binding positions include 128–132 (HGDLN), 139–141 (SGN), and aspartate 180. Residues aspartate 229 and aspartate 231 each contribute to the Mn(2+) site. Substrate contacts are provided by threonine 243 and glutamate 274.

It belongs to the arginase family. Mn(2+) is required as a cofactor.

The catalysed reaction is L-arginine + H2O = urea + L-ornithine. It functions in the pathway nitrogen metabolism; urea cycle; L-ornithine and urea from L-arginine: step 1/1. The sequence is that of Arginase (arg) from Staphylococcus aureus (strain MSSA476).